The following is a 147-amino-acid chain: Sec-independent protein translocase protein TatB (147 aa).

A helical transmembrane segment spans residues 2–22 (FSSIGWPEIFTVLILGLIIIG). The segment at 96 to 147 (FDPKKIMASGTEGEAYRERGINPQPAGDSASPQTPSNKESQPKAGFSWDDIT) is disordered. The segment covering 125–134 (ASPQTPSNKE) has biased composition (polar residues).

This sequence belongs to the TatB family. The Tat system comprises two distinct complexes: a TatABC complex, containing multiple copies of TatA, TatB and TatC subunits, and a separate TatA complex, containing only TatA subunits. Substrates initially bind to the TatABC complex, which probably triggers association of the separate TatA complex to form the active translocon.

It localises to the cell membrane. Part of the twin-arginine translocation (Tat) system that transports large folded proteins containing a characteristic twin-arginine motif in their signal peptide across membranes. Together with TatC, TatB is part of a receptor directly interacting with Tat signal peptides. TatB may form an oligomeric binding site that transiently accommodates folded Tat precursor proteins before their translocation. The polypeptide is Sec-independent protein translocase protein TatB (Corynebacterium diphtheriae (strain ATCC 700971 / NCTC 13129 / Biotype gravis)).